Reading from the N-terminus, the 550-residue chain is Aldehyde dehydrogenase family 3 member I1, chloroplastic (550 aa).

The N-terminal 59 residues, 1 to 59 (MTKLLEINHIQTLCFAKGFSPARLNVATSPFRISRRGGGGYCSNACIPYRLKFTCYATL), are a transit peptide targeting the chloroplast. 259–264 (GGARVA) lines the NAD(+) pocket. Glu281 acts as the Proton acceptor in catalysis. The active-site Nucleophile is the Cys316.

The protein belongs to the aldehyde dehydrogenase family. As to quaternary structure, homodimer and homomultimer.

The protein localises to the plastid. It is found in the chloroplast. The catalysed reaction is an aldehyde + NAD(+) + H2O = a carboxylate + NADH + 2 H(+). Its activity is regulated as follows. Thiol-based regulation. Inactivation after dimerization under oxidizing conditions. Involved in oxidative stress tolerance by detoxifying reactive aldehydes derived from lipid peroxidation. Medium- to long-chain saturated aldehydes are preferred substrates, while the short-chain aldehyde propanal is a weak substrate. Can use both NAD(+) and NADP(+), but the coenzyme preference is substrate dependent. This chain is Aldehyde dehydrogenase family 3 member I1, chloroplastic (ALDH3I1), found in Arabidopsis thaliana (Mouse-ear cress).